Reading from the N-terminus, the 429-residue chain is Maltoporin 2 (429 aa).

A signal peptide spans 1-25 (MMITLRKLPLAVAVAAGVMSAQALA). Residues 397–412 (GLQTKDSSGSGAFTSS) are compositionally biased toward polar residues. Residues 397–416 (GLQTKDSSGSGAFTSSRGDD) form a disordered region.

The protein belongs to the porin LamB (TC 1.B.3) family. In terms of assembly, homotrimer formed of three 18-stranded antiparallel beta-barrels, containing three independent channels.

The protein localises to the cell outer membrane. It catalyses the reaction beta-maltose(in) = beta-maltose(out). Functionally, involved in the transport of maltose and maltodextrins. The sequence is that of Maltoporin 2 from Klebsiella pneumoniae subsp. pneumoniae (strain ATCC 700721 / MGH 78578).